The chain runs to 449 residues: Kynurenine 3-monooxygenase (449 aa).

It belongs to the aromatic-ring hydroxylase family. KMO subfamily. The cofactor is FAD.

It catalyses the reaction L-kynurenine + NADPH + O2 + H(+) = 3-hydroxy-L-kynurenine + NADP(+) + H2O. The protein operates within cofactor biosynthesis; NAD(+) biosynthesis; quinolinate from L-kynurenine: step 1/3. Functionally, catalyzes the hydroxylation of L-kynurenine (L-Kyn) to form 3-hydroxy-L-kynurenine (L-3OHKyn). Required for synthesis of quinolinic acid. In Cytophaga hutchinsonii (strain ATCC 33406 / DSM 1761 / CIP 103989 / NBRC 15051 / NCIMB 9469 / D465), this protein is Kynurenine 3-monooxygenase.